A 178-amino-acid chain; its full sequence is uncharacterized protein (178 aa).

It localises to the mitochondrion. This is an uncharacterized protein from Paramecium tetraurelia.